The primary structure comprises 650 residues: DNA gyrase subunit B (650 aa).

One can recognise a Toprim domain in the interval 429–543 (NELFIVEGDS…AGYVYIAQPP (115 aa)). Glutamate 435, aspartate 508, and aspartate 510 together coordinate Mg(2+).

Belongs to the type II topoisomerase GyrB family. As to quaternary structure, heterotetramer, composed of two GyrA and two GyrB chains. In the heterotetramer, GyrA contains the active site tyrosine that forms a transient covalent intermediate with DNA, while GyrB binds cofactors and catalyzes ATP hydrolysis. Mg(2+) is required as a cofactor. It depends on Mn(2+) as a cofactor. Ca(2+) serves as cofactor.

It is found in the cytoplasm. The catalysed reaction is ATP-dependent breakage, passage and rejoining of double-stranded DNA.. Its function is as follows. A type II topoisomerase that negatively supercoils closed circular double-stranded (ds) DNA in an ATP-dependent manner to modulate DNA topology and maintain chromosomes in an underwound state. Negative supercoiling favors strand separation, and DNA replication, transcription, recombination and repair, all of which involve strand separation. Also able to catalyze the interconversion of other topological isomers of dsDNA rings, including catenanes and knotted rings. Type II topoisomerases break and join 2 DNA strands simultaneously in an ATP-dependent manner. This chain is DNA gyrase subunit B, found in Streptococcus pyogenes serotype M18 (strain MGAS8232).